Reading from the N-terminus, the 196-residue chain is DnaA initiator-associating protein DiaA (196 aa).

Positions 34–196 (LVQSLLNGNK…DNTLFPHQDD (163 aa)) constitute an SIS domain.

The protein belongs to the SIS family. DiaA subfamily. In terms of assembly, homotetramer; dimer of dimers.

Required for the timely initiation of chromosomal replication via direct interactions with the DnaA initiator protein. In Klebsiella pneumoniae (strain 342), this protein is DnaA initiator-associating protein DiaA.